The following is a 234-amino-acid chain: MTLLYEGKAKRIFSTNQENELRVEYKDEVTAGNGAKKDTMAGKGRLNNQITSIIFKYLQENGIESHFIKQLSETEQLVKPVKIIPLEVVVRNIASGSITKRLGFENGEVFREPLVEFFYKNDALNDPLITDDHVKLLNIASDEDIEILKSKALKINNVLKQLMDAMNLKLVDFKIEFGKTETGQILLADEISPDTCRIWDKATNANFDKDVYRNNTGSLIETYQIFLNKLEDLK.

This sequence belongs to the SAICAR synthetase family.

The enzyme catalyses 5-amino-1-(5-phospho-D-ribosyl)imidazole-4-carboxylate + L-aspartate + ATP = (2S)-2-[5-amino-1-(5-phospho-beta-D-ribosyl)imidazole-4-carboxamido]succinate + ADP + phosphate + 2 H(+). Its pathway is purine metabolism; IMP biosynthesis via de novo pathway; 5-amino-1-(5-phospho-D-ribosyl)imidazole-4-carboxamide from 5-amino-1-(5-phospho-D-ribosyl)imidazole-4-carboxylate: step 1/2. The polypeptide is Phosphoribosylaminoimidazole-succinocarboxamide synthase (Staphylococcus aureus (strain COL)).